A 421-amino-acid polypeptide reads, in one-letter code: UDP-N-acetylglucosamine 1-carboxyvinyltransferase (421 aa).

A phosphoenolpyruvate-binding site is contributed by 23-24 (KN). Position 92 (arginine 92) interacts with UDP-N-acetyl-alpha-D-glucosamine. Cysteine 116 (proton donor) is an active-site residue. Cysteine 116 is modified (2-(S-cysteinyl)pyruvic acid O-phosphothioketal). UDP-N-acetyl-alpha-D-glucosamine-binding positions include 121 to 125 (RPVDL), 161 to 164 (KVSV), aspartate 306, and isoleucine 328.

The protein belongs to the EPSP synthase family. MurA subfamily.

The protein resides in the cytoplasm. It carries out the reaction phosphoenolpyruvate + UDP-N-acetyl-alpha-D-glucosamine = UDP-N-acetyl-3-O-(1-carboxyvinyl)-alpha-D-glucosamine + phosphate. It functions in the pathway cell wall biogenesis; peptidoglycan biosynthesis. Functionally, cell wall formation. Adds enolpyruvyl to UDP-N-acetylglucosamine. This is UDP-N-acetylglucosamine 1-carboxyvinyltransferase from Vibrio vulnificus (strain CMCP6).